The following is a 426-amino-acid chain: Serine--tRNA ligase (426 aa).

The interval 36-66 is disordered; it reads KRKHLQERTQDLQSQRNTISKEIGQKKAKGE. The segment covering 46-55 has biased composition (polar residues); sequence DLQSQRNTIS. Residue 233-235 coordinates L-serine; sequence TAE. 264–266 provides a ligand contact to ATP; the sequence is RSE. Residue glutamate 287 coordinates L-serine. ATP is bound at residue 351-354; it reads EISS. Residue serine 387 coordinates L-serine.

It belongs to the class-II aminoacyl-tRNA synthetase family. Type-1 seryl-tRNA synthetase subfamily. In terms of assembly, homodimer. The tRNA molecule binds across the dimer.

It localises to the cytoplasm. It catalyses the reaction tRNA(Ser) + L-serine + ATP = L-seryl-tRNA(Ser) + AMP + diphosphate + H(+). It carries out the reaction tRNA(Sec) + L-serine + ATP = L-seryl-tRNA(Sec) + AMP + diphosphate + H(+). The protein operates within aminoacyl-tRNA biosynthesis; selenocysteinyl-tRNA(Sec) biosynthesis; L-seryl-tRNA(Sec) from L-serine and tRNA(Sec): step 1/1. Catalyzes the attachment of serine to tRNA(Ser). Is also able to aminoacylate tRNA(Sec) with serine, to form the misacylated tRNA L-seryl-tRNA(Sec), which will be further converted into selenocysteinyl-tRNA(Sec). This Francisella tularensis subsp. tularensis (strain FSC 198) protein is Serine--tRNA ligase.